The chain runs to 128 residues: Iron-sulfur cluster insertion protein ErpA (128 aa).

Positions 56, 120, and 122 each coordinate iron-sulfur cluster.

Belongs to the HesB/IscA family. As to quaternary structure, homodimer. Iron-sulfur cluster is required as a cofactor.

Its function is as follows. Required for insertion of 4Fe-4S clusters for at least IspG. The polypeptide is Iron-sulfur cluster insertion protein ErpA (Xylella fastidiosa (strain M12)).